Reading from the N-terminus, the 416-residue chain is Serine hydroxymethyltransferase (416 aa).

Residues leucine 121 and 125–127 contribute to the (6S)-5,6,7,8-tetrahydrofolate site; that span reads GHL. Lysine 229 is subject to N6-(pyridoxal phosphate)lysine.

This sequence belongs to the SHMT family. Homodimer. The cofactor is pyridoxal 5'-phosphate.

It localises to the cytoplasm. It catalyses the reaction (6R)-5,10-methylene-5,6,7,8-tetrahydrofolate + glycine + H2O = (6S)-5,6,7,8-tetrahydrofolate + L-serine. It participates in one-carbon metabolism; tetrahydrofolate interconversion. Its pathway is amino-acid biosynthesis; glycine biosynthesis; glycine from L-serine: step 1/1. In terms of biological role, catalyzes the reversible interconversion of serine and glycine with tetrahydrofolate (THF) serving as the one-carbon carrier. This reaction serves as the major source of one-carbon groups required for the biosynthesis of purines, thymidylate, methionine, and other important biomolecules. Also exhibits THF-independent aldolase activity toward beta-hydroxyamino acids, producing glycine and aldehydes, via a retro-aldol mechanism. This chain is Serine hydroxymethyltransferase, found in Aromatoleum aromaticum (strain DSM 19018 / LMG 30748 / EbN1) (Azoarcus sp. (strain EbN1)).